The primary structure comprises 201 residues: Protamine-like protein 99C (201 aa).

Residues 93-143 form a disordered region; sequence GGQQSSCQRQSPSARLRESERRSSRSKTLCRSAKNRQRGKPKPQQSKRRLS. Over residues 94–104 the composition is skewed to polar residues; sequence GQQSSCQRQSP. A compositionally biased stretch (basic residues) spans 125 to 143; sequence AKNRQRGKPKPQQSKRRLS.

The protein belongs to the UPF0771 family.

It is found in the nucleus. The protein localises to the chromosome. Functionally, regulates chromatin compaction in spermatid nuclei and is essential for male fertility. Functions in parallel with other chromatin-condensing proteins such as ProtA, ProtB and Mst77F. The chain is Protamine-like protein 99C from Drosophila melanogaster (Fruit fly).